The sequence spans 122 residues: Small ribosomal subunit protein uS13 (122 aa).

A disordered region spans residues 94-122 (LSLPVRGQRTKTNSRTRKGKRKTVAGKKK). Residues 101–122 (QRTKTNSRTRKGKRKTVAGKKK) are compositionally biased toward basic residues.

The protein belongs to the universal ribosomal protein uS13 family. In terms of assembly, part of the 30S ribosomal subunit. Forms a loose heterodimer with protein S19. Forms two bridges to the 50S subunit in the 70S ribosome.

In terms of biological role, located at the top of the head of the 30S subunit, it contacts several helices of the 16S rRNA. In the 70S ribosome it contacts the 23S rRNA (bridge B1a) and protein L5 of the 50S subunit (bridge B1b), connecting the 2 subunits; these bridges are implicated in subunit movement. Contacts the tRNAs in the A and P-sites. The polypeptide is Small ribosomal subunit protein uS13 (Chlamydia muridarum (strain MoPn / Nigg)).